The sequence spans 309 residues: Protein EXORDIUM-like 1 (309 aa).

Residues 1–23 (MASFVMGYFLLFAVAFMCLDART) form the signal peptide.

The protein belongs to the EXORDIUM family.

It is found in the secreted. The protein resides in the extracellular space. It localises to the apoplast. Functionally, may play a role in a brassinosteroid-dependent regulatory pathway that controls growth and development under low carbon and energy availability. The polypeptide is Protein EXORDIUM-like 1 (EXL1) (Arabidopsis thaliana (Mouse-ear cress)).